The sequence spans 242 residues: Small ribosomal subunit protein uS2 (242 aa).

The protein belongs to the universal ribosomal protein uS2 family.

The protein is Small ribosomal subunit protein uS2 of Vibrio campbellii (strain ATCC BAA-1116).